Consider the following 594-residue polypeptide: Zinc finger protein 37 (594 aa).

The disordered stretch occupies residues 1–253; that stretch reads MATSEPAESD…KPEKAPGSGK (253 aa). Residue Thr3 is modified to Phosphothreonine. The region spanning 3–74 is the KRAB domain; it reads TSEPAESDAV…GKKASPSSLK (72 aa). Residue Ser9 is modified to Phosphoserine. The span at 10–33 shows a compositional bias: basic and acidic residues; it reads DAVRAKEWEQLEPVQRDVYKDTKL. The segment covering 34–46 has biased composition (polar residues); it reads ENCSNPASMGNQD. Residues 89–111 are compositionally biased toward basic and acidic residues; that stretch reads QQDDEHREEKQKSQSKLTKEVTL. A compositionally biased stretch (polar residues) spans 145 to 158; sequence KSSSRGKNSNQNSD. 2 stretches are compositionally biased toward basic and acidic residues: residues 159–172 and 181–234; these read SLKKKPDTANDHRK and VNKD…TGEK. C2H2-type zinc fingers lie at residues 255 to 277, 283 to 305, 311 to 324, 339 to 361, 367 to 389, 395 to 417, 423 to 445, 451 to 473, 479 to 501, 507 to 529, 535 to 557, and 563 to 585; these read YECNHCGKVLSHKQGLLDHQRTH, YECNECGIAFSQKSHLVVHQRTH, YECEQCGKAHGHKH, YKCNECGKTFRHSSNLMQHLRSH, YECKECGKSFRYNSSLTEHVRTH, YECNECGKAFKYGSSLTKHMRIH, FECNECGKTFSKKSHLVIHQRTH, YKCDECGKAFGHSSSLTYHMRTH, FECNQCGKAFKQIEGLTQHQRVH, YECVECGKAFSQKSHLIVHQRTH, FECYECGKAFNAKSQLVIHQRSH, and YECIECGKAFKQNASLTKHMKIH.

The protein belongs to the krueppel C2H2-type zinc-finger protein family. As to expression, expressed in testis and brain.

It localises to the nucleus. In terms of biological role, may have a role in regulating spermiogenesis. The polypeptide is Zinc finger protein 37 (Zfp37) (Mus musculus (Mouse)).